The sequence spans 152 residues: SsrA-binding protein (152 aa).

The protein belongs to the SmpB family.

Its subcellular location is the cytoplasm. Its function is as follows. Required for rescue of stalled ribosomes mediated by trans-translation. Binds to transfer-messenger RNA (tmRNA), required for stable association of tmRNA with ribosomes. tmRNA and SmpB together mimic tRNA shape, replacing the anticodon stem-loop with SmpB. tmRNA is encoded by the ssrA gene; the 2 termini fold to resemble tRNA(Ala) and it encodes a 'tag peptide', a short internal open reading frame. During trans-translation Ala-aminoacylated tmRNA acts like a tRNA, entering the A-site of stalled ribosomes, displacing the stalled mRNA. The ribosome then switches to translate the ORF on the tmRNA; the nascent peptide is terminated with the 'tag peptide' encoded by the tmRNA and targeted for degradation. The ribosome is freed to recommence translation, which seems to be the essential function of trans-translation. In Helicobacter acinonychis (strain Sheeba), this protein is SsrA-binding protein.